A 736-amino-acid chain; its full sequence is Dynamin-1-like protein (736 aa).

Met-1 carries the post-translational modification N-acetylmethionine. One can recognise a Dynamin-type G domain in the interval 22–302 (IIQLPQIVVV…LMHHIRDCLP (281 aa)). A G1 motif region spans residues 32–39 (GTQSSGKS). 32–40 (GTQSSGKSS) is a binding site for GTP. Residues 58–60 (VTR) form a G2 motif region. The G3 motif stretch occupies residues 146 to 149 (DLPG). The segment at 215-218 (TKLD) is G4 motif. GTP-binding positions include 215-221 (TKLDLMD) and 246-249 (NRSQ). Residues 245–248 (VNRS) form a G5 motif region. A middle domain region spans residues 344–489 (YCNTIEGTAK…NEMVHNLVAI (146 aa)). Residues 448–685 (NYSTQELLRF…NHVKDTLQSE (238 aa)) are interaction with GSK3B. The tract at residues 502 to 569 (ADACGLMNNN…IQDNRRETKN (68 aa)) is b domain. A disordered region spans residues 522–554 (RELPSAGSRDKSSKVPSALAPASQEPPPAASAE). Ser-529 carries the post-translational modification Phosphoserine. Glycyl lysine isopeptide (Lys-Gly) (interchain with G-Cter in SUMO) cross-links involve residues Lys-532, Lys-535, Lys-558, and Lys-568. The tract at residues 542–736 (PASQEPPPAA…IAEIRETHLW (195 aa)) is C-terminal dimerization domain. Residues 566-588 (ETKNVPSAGGGIGDGGQEPTTGN) form a disordered region. Residues Thr-585 and Thr-586 are each glycosylated (O-linked (GlcNAc) threonine). Lys-594 participates in a covalent cross-link: Glycyl lysine isopeptide (Lys-Gly) (interchain with G-Cter in SUMO). Lys-597 bears the N6-acetyllysine; alternate mark. Lys-597 is covalently cross-linked (Glycyl lysine isopeptide (Lys-Gly) (interchain with G-Cter in SUMO); alternate). Lys-606 is covalently cross-linked (Glycyl lysine isopeptide (Lys-Gly) (interchain with G-Cter in SUMO)). Phosphoserine is present on Ser-607. Residue Lys-608 forms a Glycyl lysine isopeptide (Lys-Gly) (interchain with G-Cter in SUMO) linkage. Position 616 is a phosphoserine; by PINK1 (Ser-616). Ser-637 carries the phosphoserine; by CAMK1 and PKA modification. Cys-644 is subject to S-nitrosocysteine. The GED domain maps to 644–735 (CEVIERLIKS…IIAEIRETHL (92 aa)). Residues 654–668 (YFLIVRKNIQDSVPK) are important for homodimerization.

This sequence belongs to the TRAFAC class dynamin-like GTPase superfamily. Dynamin/Fzo/YdjA family. In terms of assembly, homotetramer; dimerizes through the N-terminal GTP-middle region of one molecule binding to the GED domain of another DNM1L molecule. Oligomerizes in a GTP-dependent manner to form membrane-associated tubules with a spiral pattern. Interacts with GSK3B and MARCHF5. Interacts (via the GTPase and B domains) with UBE2I; the interaction promotes sumoylation of DNM1L, mainly in its B domain. Interacts with PPP3CA; the interaction dephosphorylates DNM1L and regulates its transition to mitochondria. Interacts with BCL2L1 isoform BCL-X(L) and CLTA; DNM1L and BCL2L1 isoform BCL-X(L) may form a complex in synaptic vesicles that also contains clathrin and MFF. Interacts with MFF; the interaction is inhibited by C11orf65/MFI. Interacts with FIS1. Interacts with MIEF2 and MIEF1; GTP-dependent, regulates GTP hydrolysis and DNM1L oligomerization. Interacts with PGAM5; this interaction leads to dephosphorylation at Ser-656 and activation of GTPase activity and eventually to mitochondria fragmentation. Interacts with RALBP1; during mitosis, recruits DNM1L to the mitochondrion and mediates its activation by the mitotic kinase cyclin B-CDK1. Interacts with FUNDC1; this interaction recruits DNM1L/DRP1 at ER-mitochondria contact sites. In terms of processing, phosphorylation/dephosphorylation events on two sites near the GED domain regulate mitochondrial fission. Phosphorylation on Ser-637 inhibits mitochondrial fission probably through preventing intramolecular interaction. Dephosphorylated on this site by PPP3CA which promotes mitochondrial fission. Phosphorylation on Ser-616 by Pink1 activates the GTPase activity and promotes mitochondrial fission. Phosphorylated in a circadian manner at Ser-637. Dephosphorylated by PGAM5. Sumoylated on various lysine residues within the B domain, probably by MUL1. Sumoylation positively regulates mitochondrial fission. Desumoylated by SENP5 during G2/M transition of mitosis. Appears to be linked to its catalytic activity. Post-translationally, S-nitrosylation increases DNM1L dimerization, mitochondrial fission and causes neuronal damage. In terms of processing, O-GlcNAcylation augments the level of the GTP-bound active form of DNM1L and induces translocation from the cytoplasm to mitochondria in cardiomyocytes. It also decreases phosphorylation at Ser-637. Ubiquitination by MARCHF5 affects mitochondrial morphology. As to expression, expressed in the cerebellum and in several regions of the cerebrum and diencephalon. Strongly expressed in the cerebellar Purkinje cells and in the pontile giant neurons. Widely expressed. In terms of tissue distribution, brain-specific. As to expression, brain-specific (at protein level). Expressed in most of the subregions of the brain, including the cerebellum, midbrain, hippocampus, striatum, cerebral cortex, and brain stem. Weakly expressed in the olfactory bulb.

The protein localises to the cytoplasm. It is found in the cytosol. It localises to the golgi apparatus. The protein resides in the endomembrane system. Its subcellular location is the mitochondrion outer membrane. The protein localises to the peroxisome. It is found in the membrane. It localises to the clathrin-coated pit. The protein resides in the cytoplasmic vesicle. Its subcellular location is the secretory vesicle. The protein localises to the synaptic vesicle membrane. It is found in the lysosome. It localises to the late endosome. The protein resides in the cell membrane. Its subcellular location is the postsynaptic density. The catalysed reaction is GTP + H2O = GDP + phosphate + H(+). In terms of biological role, functions in mitochondrial and peroxisomal division. Mediates membrane fission through oligomerization into membrane-associated tubular structures that wrap around the scission site to constrict and sever the mitochondrial membrane through a GTP hydrolysis-dependent mechanism. The specific recruitment at scission sites is mediated by membrane receptors like MFF, MIEF1 and MIEF2 for mitochondrial membranes. While the recruitment by the membrane receptors is GTP-dependent, the following hydrolysis of GTP induces the dissociation from the receptors and allows DNM1L filaments to curl into closed rings that are probably sufficient to sever a double membrane. Acts downstream of PINK1 to promote mitochondrial fission in a PRKN-dependent manner. Plays an important role in mitochondrial fission during mitosis. Required for formation of endocytic vesicles. Through its function in mitochondrial division, ensures the survival of at least some types of postmitotic neurons, including Purkinje cells, by suppressing oxidative damage. Required for normal brain development, including that of cerebellum. Facilitates developmentally regulated apoptosis during neural tube formation. Required for a normal rate of cytochrome c release and caspase activation during apoptosis; this requirement may depend upon the cell type and the physiological apoptotic cues. Proposed to regulate synaptic vesicle membrane dynamics through association with BCL2L1 isoform Bcl-X(L) which stimulates its GTPase activity in synaptic vesicles; the function may require its recruitment by MFF to clathrin-containing vesicles. Required for programmed necrosis execution. Rhythmic control of its activity following phosphorylation at Ser-637 is essential for the circadian control of mitochondrial ATP production. Functionally, regulates postsynaptic clathrin-mediated endocytosis by positioning the endocytic zone at the postsynaptic density, independently of mitochondrial division. The polypeptide is Dynamin-1-like protein (Mus musculus (Mouse)).